A 185-amino-acid chain; its full sequence is MENTTRTWVFPKLDTRQFVLLAMLMALHMVLSRLTVGTNVLQVSFAFVTMSLIAKWYGPLWSMLIAAILDVIGATIINPGAFFVGFTFTAMISALIYSLAYFKHDKTSWWRVSVAVGLVLLIANIGLNSIWLVMMYHTAHDWPSFLAFITPRVIKNLIMFPIQVGISYFLLNNQVISHTTKKIFS.

Transmembrane regions (helical) follow at residues 34-54, 64-84, 114-134, and 157-177; these read LTVGTNVLQVSFAFVTMSLIA, LIAAILDVIGATIINPGAFFV, VAVGLVLLIANIGLNSIWLVM, and LIMFPIQVGISYFLLNNQVIS.

In terms of assembly, in E.coli forms a stable energy-coupling factor (ECF) transporter complex probably composed of a membrane-embedded substrate-binding protein (S component), two ATP-binding proteins (A components) and a transmembrane protein (T component).

It is found in the cell membrane. In terms of biological role, folate-binding protein that interacts with the energy-coupling factor (ECF) ABC-transporter complex. Unlike classic ABC transporters this ECF transporter provides the energy necessary to transport a number of different substrates. The substrates themselves are bound by transmembrane, not extracytoplasmic soluble proteins. Upon coexpression with EcfA1A2T in E.coli allows 5-formyltetrahydrofolate uptake; uptake requires both FolT and EcfA1A2T. The chain is Folate transporter FolT (folT) from Leuconostoc mesenteroides subsp. mesenteroides (strain ATCC 8293 / DSM 20343 / BCRC 11652 / CCM 1803 / JCM 6124 / NCDO 523 / NBRC 100496 / NCIMB 8023 / NCTC 12954 / NRRL B-1118 / 37Y).